A 261-amino-acid chain; its full sequence is Thiamine thiazole synthase (261 aa).

NAD(+) contacts are provided by residues Ala33, 52–53, Gly60, Val124, and 152–154; these read ER and HVD. 2 residues coordinate Fe cation: Asp154 and His169. Ile219 provides a ligand contact to NAD(+). Glycine is bound at residue Arg229.

It belongs to the THI4 family. In terms of assembly, homooctamer; tetramer of dimers. Fe(2+) is required as a cofactor.

The enzyme catalyses hydrogen sulfide + glycine + NAD(+) = ADP-5-ethyl-4-methylthiazole-2-carboxylate + nicotinamide + 3 H2O + H(+). It participates in cofactor biosynthesis; thiamine diphosphate biosynthesis. Its function is as follows. Involved in the biosynthesis of the thiazole moiety of thiamine. Catalyzes the conversion of NAD and glycine to adenosine diphosphate 5-(2-hydroxyethyl)-4-methylthiazole-2-carboxylate (ADT), an adenylated thiazole intermediate, using free sulfide as a source of sulfur. In Pyrobaculum calidifontis (strain DSM 21063 / JCM 11548 / VA1), this protein is Thiamine thiazole synthase.